A 615-amino-acid polypeptide reads, in one-letter code: UvrABC system protein C (615 aa).

One can recognise a GIY-YIG domain in the interval 14–91 (TSPGCYIHKD…IKENKPKYNI (78 aa)). The UVR domain maps to 196–231 (NKIIDELKGKMAAAAQTMEFERAAEYRDLIQAIGTL).

It belongs to the UvrC family. In terms of assembly, interacts with UvrB in an incision complex.

Its subcellular location is the cytoplasm. Functionally, the UvrABC repair system catalyzes the recognition and processing of DNA lesions. UvrC both incises the 5' and 3' sides of the lesion. The N-terminal half is responsible for the 3' incision and the C-terminal half is responsible for the 5' incision. The chain is UvrABC system protein C from Streptococcus pneumoniae serotype 19F (strain G54).